The sequence spans 143 residues: 18 kDa heat shock protein (143 aa).

The 113-residue stretch at 23–135 (TWSRPTAMPM…KRRRVKVGQG (113 aa)) folds into the sHSP domain.

It belongs to the small heat shock protein (HSP20) family.

This Streptomyces albus G protein is 18 kDa heat shock protein (hsp18).